The sequence spans 246 residues: 1-(5-phosphoribosyl)-5-[(5-phosphoribosylamino)methylideneamino] imidazole-4-carboxamide isomerase (246 aa).

Residue Asp8 is the Proton acceptor of the active site. The active-site Proton donor is the Asp131.

The protein belongs to the HisA/HisF family.

It is found in the cytoplasm. It carries out the reaction 1-(5-phospho-beta-D-ribosyl)-5-[(5-phospho-beta-D-ribosylamino)methylideneamino]imidazole-4-carboxamide = 5-[(5-phospho-1-deoxy-D-ribulos-1-ylimino)methylamino]-1-(5-phospho-beta-D-ribosyl)imidazole-4-carboxamide. It participates in amino-acid biosynthesis; L-histidine biosynthesis; L-histidine from 5-phospho-alpha-D-ribose 1-diphosphate: step 4/9. This Lactococcus lactis subsp. cremoris (strain SK11) protein is 1-(5-phosphoribosyl)-5-[(5-phosphoribosylamino)methylideneamino] imidazole-4-carboxamide isomerase.